A 1136-amino-acid polypeptide reads, in one-letter code: Nuclear pore complex protein Nup133 (1136 aa).

Residues 1–26 (MFSPRGTPGSGRRQAPRTGGRRSVSA) are disordered.

The protein belongs to the nucleoporin Nup133 family. In terms of assembly, forms part of the Nup160 subcomplex in the nuclear pore which is composed of NUP160, NUP133, NUP107 and Nup96. This complex plays a role in RNA export and in tethering Nup98 and NUP153 to the nucleus. As to expression, widely expressed in the embryo and in adult tissues. Higher expression is observed in the brain, testes, ovary, skin, and kidney.

It is found in the nucleus. Its subcellular location is the nuclear pore complex. The protein localises to the chromosome. The protein resides in the centromere. It localises to the kinetochore. In terms of biological role, involved in poly(A)+ RNA transport. Involved in nephrogenesis. The chain is Nuclear pore complex protein Nup133 from Danio rerio (Zebrafish).